The primary structure comprises 424 residues: Arogenate dehydratase 1 (424 aa).

A chloroplast-targeting transit peptide spans 1–52; that stretch reads MQSLTPSSGVNLKSIIRKTSLPPGQTRFITGRVIKCGYQVDSANTVNTAGAP. In terms of domain architecture, Prephenate dehydratase spans 131–308; sequence RVAYQGVPGA…NVTRFVMLAR (178 aa). The 92-residue stretch at 321–412 folds into the ACT domain; it reads TSIVFAHEGT…SFLRVLGSYP (92 aa).

As to expression, mostly expressed in flowers, especially in petals (corollas and tubes), and, at low levels, in roots, stems, leaves, pistils, stamens, ovaries and sepals.

It localises to the plastid. Its subcellular location is the chloroplast stroma. It catalyses the reaction L-arogenate + H(+) = L-phenylalanine + CO2 + H2O. It functions in the pathway amino-acid biosynthesis; L-phenylalanine biosynthesis; L-phenylalanine from L-arogenate: step 1/1. In terms of biological role, converts L-arogenate produced from the shikimate-chorismate pathway into phenylalanine (Phe). Involved in floral volatile benzenoids and phenylpropanoids (FVBP) production. The polypeptide is Arogenate dehydratase 1 (Petunia hybrida (Petunia)).